Reading from the N-terminus, the 551-residue chain is Putative transport protein CGSHiEE_03135 (551 aa).

5 consecutive transmembrane segments (helical) span residues Ile-4 to Trp-24, Gly-28 to Asp-48, Phe-65 to Ser-85, Ala-95 to Ala-115, and Val-157 to Ile-177. RCK C-terminal domains lie at Arg-191–Tyr-275 and Val-277–Asn-360. The next 6 membrane-spanning stretches (helical) occupy residues Met-370–Ile-390, Ala-402–Phe-424, Ile-438–Val-458, Leu-463–Ile-483, Tyr-492–Ala-512, and Val-529–Trp-549.

Belongs to the AAE transporter (TC 2.A.81) family. YidE subfamily.

The protein localises to the cell membrane. The sequence is that of Putative transport protein CGSHiEE_03135 from Haemophilus influenzae (strain PittEE).